We begin with the raw amino-acid sequence, 309 residues long: HTH-type transcriptional activator AaeR (309 aa).

The HTH lysR-type domain occupies 1–59 (MERLKRMSVFAKVVEFGSFTAAARQLQMSVSSISQTVSKLEDELQVKLLNRSTRSIGLT). Residues 19–38 (FTAAARQLQMSVSSISQTVS) constitute a DNA-binding region (H-T-H motif).

Belongs to the LysR transcriptional regulatory family.

Activity is regulated by p-hydroxybenzoic acid. Functionally, transcriptional regulator that activates expression of the aaeXAB operon, which is involved in the efflux of aromatic carboxylic acids such as p-hydroxybenzoic acid (pHBA). In the presence of the effector pHBA, acts by binding to a single target within the aaeXAB-aaeR intergenic region. In the absence of pHBA, binds more than 50 sites along the E.coli K12 genome, including genes related to biofilm formation and several genes involved in stress response, suggesting that it might play a role in quorum sensing in the absence of pHBA. This is HTH-type transcriptional activator AaeR from Escherichia coli (strain K12).